Reading from the N-terminus, the 417-residue chain is Glutamyl-tRNA reductase (417 aa).

Substrate is bound by residues 49–52 (TCNR), S107, 112–114 (EEQ), and Q118. The active-site Nucleophile is the C50. 187–192 (GTGEVS) serves as a coordination point for NADP(+).

It belongs to the glutamyl-tRNA reductase family. In terms of assembly, homodimer.

It catalyses the reaction (S)-4-amino-5-oxopentanoate + tRNA(Glu) + NADP(+) = L-glutamyl-tRNA(Glu) + NADPH + H(+). The protein operates within porphyrin-containing compound metabolism; protoporphyrin-IX biosynthesis; 5-aminolevulinate from L-glutamyl-tRNA(Glu): step 1/2. Catalyzes the NADPH-dependent reduction of glutamyl-tRNA(Glu) to glutamate 1-semialdehyde (GSA). The chain is Glutamyl-tRNA reductase from Cenarchaeum symbiosum (strain A).